A 485-amino-acid polypeptide reads, in one-letter code: tRNA sulfurtransferase (485 aa).

A THUMP domain is found at 61–165 (EELIALLQRI…DDKMMLVKAR (105 aa)). ATP contacts are provided by residues 183 to 184 (LI), lysine 265, glycine 287, and glutamine 296. Cysteine 344 and cysteine 456 are joined by a disulfide. One can recognise a Rhodanese domain in the interval 404–483 (LSENEVILDI…FSNVRVFAKK (80 aa)). Cysteine 456 serves as the catalytic Cysteine persulfide intermediate.

It belongs to the ThiI family.

The protein resides in the cytoplasm. The catalysed reaction is [ThiI sulfur-carrier protein]-S-sulfanyl-L-cysteine + a uridine in tRNA + 2 reduced [2Fe-2S]-[ferredoxin] + ATP + H(+) = [ThiI sulfur-carrier protein]-L-cysteine + a 4-thiouridine in tRNA + 2 oxidized [2Fe-2S]-[ferredoxin] + AMP + diphosphate. The enzyme catalyses [ThiS sulfur-carrier protein]-C-terminal Gly-Gly-AMP + S-sulfanyl-L-cysteinyl-[cysteine desulfurase] + AH2 = [ThiS sulfur-carrier protein]-C-terminal-Gly-aminoethanethioate + L-cysteinyl-[cysteine desulfurase] + A + AMP + 2 H(+). It functions in the pathway cofactor biosynthesis; thiamine diphosphate biosynthesis. In terms of biological role, catalyzes the ATP-dependent transfer of a sulfur to tRNA to produce 4-thiouridine in position 8 of tRNAs, which functions as a near-UV photosensor. Also catalyzes the transfer of sulfur to the sulfur carrier protein ThiS, forming ThiS-thiocarboxylate. This is a step in the synthesis of thiazole, in the thiamine biosynthesis pathway. The sulfur is donated as persulfide by IscS. The polypeptide is tRNA sulfurtransferase (Haemophilus influenzae (strain PittEE)).